A 356-amino-acid polypeptide reads, in one-letter code: MRRELLLEKIETYKAIMPWYVLDYYQSKLAIPYSFTTLYEYLKEYKRFFDWLMDADLTQAPKIADIDLSTLEHLTKKDLEAFVLYLRERPSLNTYSTKEGLSQTTINRTLSALSSLYKYLTEEVENDQGEPYFYRNVMKKVSTKKKKETLASRAENIKQKLFLGDETLAFLDYVDKEYEQKLSNRAKSSFRKNKERDLAIIALLLASGVRLSEAVNLDLKDVNLNMMIIEVIRKGGKRDSVNVAGFAKGYLESYLAVRQRRYKAEKQDLAFFLTEYRGVPNRMDASSIEKMVGKYSEDFKIRVTPHKLRHTLATRLYDATKSQVLVSHQLGHSSTQVTDLYTHIVNDEQKNALDNL.

The Core-binding (CB) domain occupies 16–121 (IMPWYVLDYY…ALSSLYKYLT (106 aa)). The Tyr recombinase domain occupies 169–354 (AFLDYVDKEY…VNDEQKNALD (186 aa)). Active-site residues include Arg-210, Lys-234, His-306, Arg-309, and His-332. Tyr-341 acts as the O-(3'-phospho-DNA)-tyrosine intermediate in catalysis.

Belongs to the 'phage' integrase family. XerS subfamily.

It is found in the cytoplasm. Its activity is regulated as follows. FtsK is required for recombination. In terms of biological role, site-specific tyrosine recombinase, which acts by catalyzing the cutting and rejoining of the recombining DNA molecules. Essential to convert dimers of the bacterial chromosome into monomers to permit their segregation at cell division. The polypeptide is Tyrosine recombinase XerS (Streptococcus pyogenes serotype M18 (strain MGAS8232)).